The sequence spans 237 residues: MADS-box protein GGM13 (237 aa).

The region spanning 1–61 is the MADS-box domain; the sequence is MGRGKIEIKR…GKLFEYSSAS (61 aa). Residues 84 to 174 enclose the K-box domain; it reads NQHLYCEMTR…CRLLAEQQAA (91 aa).

In terms of tissue distribution, expression specific for female reproductive structures: strong at the adaxial base of the cupules, where ovules will later develop, then in the outermost cell layer of the nucellus, in the inner envelope, and in the inner half of the middle envelope at late stage of ovule development.

The protein resides in the nucleus. In terms of biological role, probable transcription factor. The protein is MADS-box protein GGM13 (GGM13) of Gnetum gnemon (Spanish joint-fir).